Here is a 229-residue protein sequence, read N- to C-terminus: ATP synthase subunit a 3 (229 aa).

Helical transmembrane passes span 25-45 (ADAVSYTWLIIALLLLLSFLA), 86-106 (VATIGIFVLVSNLIGLIPGFF), 111-131 (NINTTAACAIVVFLSTHVVGI), 142-162 (FCGPILWLTPIMFFIEVIGHL), 181-201 (LVLIIFFGLAPFLVPLPMMLM), and 202-222 (GVLVSFIQAFVFMLLTMIYIQ).

This sequence belongs to the ATPase A chain family. F-type ATPases have 2 components, CF(1) - the catalytic core - and CF(0) - the membrane proton channel. CF(1) has five subunits: alpha(3), beta(3), gamma(1), delta(1), epsilon(1). CF(0) has three main subunits: a(1), b(2) and c(9-12). The alpha and beta chains form an alternating ring which encloses part of the gamma chain. CF(1) is attached to CF(0) by a central stalk formed by the gamma and epsilon chains, while a peripheral stalk is formed by the delta and b chains.

The protein localises to the cell inner membrane. Its function is as follows. Key component of the proton channel; it plays a direct role in the translocation of protons across the membrane. The sequence is that of ATP synthase subunit a 3 from Pelobacter propionicus (strain DSM 2379 / NBRC 103807 / OttBd1).